A 253-amino-acid chain; its full sequence is 5'-nucleotidase SurE (253 aa).

A divalent metal cation-binding residues include D8, D9, S39, and N95.

Belongs to the SurE nucleotidase family. It depends on a divalent metal cation as a cofactor.

It localises to the cytoplasm. The catalysed reaction is a ribonucleoside 5'-phosphate + H2O = a ribonucleoside + phosphate. Functionally, nucleotidase that shows phosphatase activity on nucleoside 5'-monophosphates. The protein is 5'-nucleotidase SurE of Clostridium beijerinckii (strain ATCC 51743 / NCIMB 8052) (Clostridium acetobutylicum).